We begin with the raw amino-acid sequence, 251 residues long: Ubiquinone/menaquinone biosynthesis C-methyltransferase UbiE (251 aa).

S-adenosyl-L-methionine contacts are provided by residues T74, D95, 123–124 (NA), and S140.

It belongs to the class I-like SAM-binding methyltransferase superfamily. MenG/UbiE family.

It catalyses the reaction a 2-demethylmenaquinol + S-adenosyl-L-methionine = a menaquinol + S-adenosyl-L-homocysteine + H(+). The catalysed reaction is a 2-methoxy-6-(all-trans-polyprenyl)benzene-1,4-diol + S-adenosyl-L-methionine = a 5-methoxy-2-methyl-3-(all-trans-polyprenyl)benzene-1,4-diol + S-adenosyl-L-homocysteine + H(+). It functions in the pathway quinol/quinone metabolism; menaquinone biosynthesis; menaquinol from 1,4-dihydroxy-2-naphthoate: step 2/2. It participates in cofactor biosynthesis; ubiquinone biosynthesis. Methyltransferase required for the conversion of demethylmenaquinol (DMKH2) to menaquinol (MKH2) and the conversion of 2-polyprenyl-6-methoxy-1,4-benzoquinol (DDMQH2) to 2-polyprenyl-3-methyl-6-methoxy-1,4-benzoquinol (DMQH2). In Escherichia coli O1:K1 / APEC, this protein is Ubiquinone/menaquinone biosynthesis C-methyltransferase UbiE.